A 205-amino-acid polypeptide reads, in one-letter code: Large ribosomal subunit protein uL4 (205 aa).

Belongs to the universal ribosomal protein uL4 family. In terms of assembly, part of the 50S ribosomal subunit.

Its function is as follows. One of the primary rRNA binding proteins, this protein initially binds near the 5'-end of the 23S rRNA. It is important during the early stages of 50S assembly. It makes multiple contacts with different domains of the 23S rRNA in the assembled 50S subunit and ribosome. Forms part of the polypeptide exit tunnel. The chain is Large ribosomal subunit protein uL4 from Ruegeria sp. (strain TM1040) (Silicibacter sp.).